We begin with the raw amino-acid sequence, 141 residues long: Nucleoside diphosphate kinase (141 aa).

K11, F59, R87, T93, R104, and N114 together coordinate ATP. The Pros-phosphohistidine intermediate role is filled by H117.

The protein belongs to the NDK family. As to quaternary structure, homotetramer. Requires Mg(2+) as cofactor.

The protein localises to the cytoplasm. It catalyses the reaction a 2'-deoxyribonucleoside 5'-diphosphate + ATP = a 2'-deoxyribonucleoside 5'-triphosphate + ADP. The enzyme catalyses a ribonucleoside 5'-diphosphate + ATP = a ribonucleoside 5'-triphosphate + ADP. Its function is as follows. Major role in the synthesis of nucleoside triphosphates other than ATP. The ATP gamma phosphate is transferred to the NDP beta phosphate via a ping-pong mechanism, using a phosphorylated active-site intermediate. This Azoarcus sp. (strain BH72) protein is Nucleoside diphosphate kinase.